A 341-amino-acid chain; its full sequence is Abnormal cell lineage protein 44 (341 aa).

A signal peptide spans Met1 to Ala21. 11 disulfide bridges follow: Cys84–Cys95, Cys134–Cys142, Cys144–Cys158, Cys206–Cys220, Cys208–Cys215, Cys265–Cys292, Cys275–Cys287, Cys291–Cys331, Cys307–Cys322, Cys309–Cys319, and Cys314–Cys315. A lipid anchor (O-palmitoleoyl serine; by mom-1) is attached at Ser212. The N-linked (GlcNAc...) asparagine glycan is linked to Asn279.

The protein belongs to the Wnt family. Palmitoleoylation is required for efficient binding to frizzled receptors. Depalmitoleoylation leads to Wnt signaling pathway inhibition.

The protein resides in the secreted. Its subcellular location is the extracellular space. The protein localises to the extracellular matrix. Functionally, ligand for members of the frizzled family of seven transmembrane receptors. Affects male tail development, vulval precursor cell specification and egg laying. Involved in morphogenesis by influencing polarity of asymmetric cell divisions of the B, U, and F cells in the male, and the T cell in males and hermaphrodites. Controls spindle orientation in B-gamma cell division during male copulatory spicule development. Involved in specification of the P7.p lineage during vulval development. Has a role in providing polarity and default lin-17 localization in axon development and positioning of neuromuscular synapses in DA9 regions by negatively regulating synaptogenesis. The chain is Abnormal cell lineage protein 44 from Caenorhabditis briggsae.